A 277-amino-acid chain; its full sequence is Radial spoke head protein 9 homolog (277 aa).

It belongs to the flagellar radial spoke RSP9 family. Component of axonemal radial spoke complexes.

It is found in the cytoplasm. The protein resides in the cytoskeleton. The protein localises to the cilium axoneme. Its subcellular location is the flagellum axoneme. It localises to the cell projection. It is found in the kinocilium. Functionally, functions as part of axonemal radial spoke complexes that play an important part in the motility of sperm and cilia. Essential for both the radial spoke head assembly and the central pair microtubule stability in ependymal motile cilia. Required for motility of olfactory and neural cilia and for the structural integrity of ciliary axonemes in both 9+0 and 9+2 motile cilia. This chain is Radial spoke head protein 9 homolog (rsph9), found in Xenopus tropicalis (Western clawed frog).